A 530-amino-acid polypeptide reads, in one-letter code: Probable phosphoacetylglucosamine mutase (530 aa).

S62 serves as the catalytic Phosphoserine intermediate. The Mg(2+) site is built by S62, D278, D280, and D282. Substrate contacts are provided by residues 369-371 (EPN), 481-485 (RPSGT), and R490.

It belongs to the phosphohexose mutase family. Requires Mg(2+) as cofactor.

The enzyme catalyses N-acetyl-alpha-D-glucosamine 1-phosphate = N-acetyl-D-glucosamine 6-phosphate. Its pathway is nucleotide-sugar biosynthesis; UDP-N-acetyl-alpha-D-glucosamine biosynthesis; N-acetyl-alpha-D-glucosamine 1-phosphate from alpha-D-glucosamine 6-phosphate (route I): step 2/2. Functionally, catalyzes the conversion of GlcNAc-6-P into GlcNAc-1-P during the synthesis of uridine diphosphate/UDP-GlcNAc, which is a biosynthetic precursor of chitin and also supplies the amino sugars for N-linked oligosaccharides of glycoproteins. The sequence is that of Probable phosphoacetylglucosamine mutase from Encephalitozoon cuniculi (strain GB-M1) (Microsporidian parasite).